A 372-amino-acid polypeptide reads, in one-letter code: Putative glutamate--cysteine ligase 2 (372 aa).

The protein belongs to the glutamate--cysteine ligase type 2 family. YbdK subfamily. In terms of assembly, homodimer.

The enzyme catalyses L-cysteine + L-glutamate + ATP = gamma-L-glutamyl-L-cysteine + ADP + phosphate + H(+). In terms of biological role, ATP-dependent carboxylate-amine ligase which exhibits weak glutamate--cysteine ligase activity. The sequence is that of Putative glutamate--cysteine ligase 2 (ybdK) from Salmonella heidelberg (strain SL476).